The following is a 191-amino-acid chain: Protein GrpE (191 aa).

Residues 1-13 show a composition bias toward basic and acidic residues; that stretch reads MSEKKNKKEKLAE. The disordered stretch occupies residues 1–40; that stretch reads MSEKKNKKEKLAEEIEQEELNSLDESVETVEEEATEETLT. Acidic residues predominate over residues 14–40; it reads EIEQEELNSLDESVETVEEEATEETLT.

This sequence belongs to the GrpE family. In terms of assembly, homodimer.

The protein localises to the cytoplasm. Participates actively in the response to hyperosmotic and heat shock by preventing the aggregation of stress-denatured proteins, in association with DnaK and GrpE. It is the nucleotide exchange factor for DnaK and may function as a thermosensor. Unfolded proteins bind initially to DnaJ; upon interaction with the DnaJ-bound protein, DnaK hydrolyzes its bound ATP, resulting in the formation of a stable complex. GrpE releases ADP from DnaK; ATP binding to DnaK triggers the release of the substrate protein, thus completing the reaction cycle. Several rounds of ATP-dependent interactions between DnaJ, DnaK and GrpE are required for fully efficient folding. This Listeria innocua serovar 6a (strain ATCC BAA-680 / CLIP 11262) protein is Protein GrpE.